The chain runs to 625 residues: tRNA uridine 5-carboxymethylaminomethyl modification enzyme MnmG (625 aa).

Position 14–19 (Gly-14–Gly-19) interacts with FAD. Gly-273–Phe-287 provides a ligand contact to NAD(+).

Belongs to the MnmG family. As to quaternary structure, homodimer. Heterotetramer of two MnmE and two MnmG subunits. FAD is required as a cofactor.

The protein resides in the cytoplasm. NAD-binding protein involved in the addition of a carboxymethylaminomethyl (cmnm) group at the wobble position (U34) of certain tRNAs, forming tRNA-cmnm(5)s(2)U34. This chain is tRNA uridine 5-carboxymethylaminomethyl modification enzyme MnmG, found in Clostridium botulinum (strain Okra / Type B1).